We begin with the raw amino-acid sequence, 427 residues long: Peptidase B (427 aa).

Residues K195 and D200 each contribute to the Mn(2+) site. The active site involves K207. D218, D277, and E279 together coordinate Mn(2+). R281 is an active-site residue.

This sequence belongs to the peptidase M17 family. In terms of assembly, homohexamer. It depends on Mn(2+) as a cofactor.

Its subcellular location is the cytoplasm. The catalysed reaction is Release of an N-terminal amino acid, Xaa, from a peptide or arylamide. Xaa is preferably Glu or Asp but may be other amino acids, including Leu, Met, His, Cys and Gln.. In terms of biological role, probably plays an important role in intracellular peptide degradation. This chain is Peptidase B, found in Escherichia coli (strain ATCC 8739 / DSM 1576 / NBRC 3972 / NCIMB 8545 / WDCM 00012 / Crooks).